The chain runs to 552 residues: C-type lectin receptor-like tyrosine-protein kinase At1g52310 (552 aa).

The signal sequence occupies residues 1–27 (MELKWVSCRKQSLFLISCLALLCLASL). Residues 28–201 (DTISCESTQN…DIKCRNCHKY (174 aa)) are Extracellular-facing. Residues Asn-37, Asn-59, Asn-69, Asn-106, Asn-118, Asn-137, Asn-154, Asn-169, and Asn-180 are each glycosylated (N-linked (GlcNAc...) asparagine). The C-type lectin domain maps to 59-188 (NQTKCYAYFK…CNASHAFVCA (130 aa)). 2 disulfide bridges follow: Cys-80–Cys-187 and Cys-164–Cys-179. A helical membrane pass occupies residues 202-222 (LVILAVVSGLILFTTFAIILW). The Cytoplasmic segment spans residues 223–552 (LLVYKRSKKR…QQLVQPLEVK (330 aa)). The 279-residue stretch at 268-546 (SEANRLAGDA…HVVHQLQQLV (279 aa)) folds into the Protein kinase domain. ATP is bound by residues 274-282 (AGDAKTGGT) and Lys-296. The active-site Proton acceptor is Asp-394.

This sequence belongs to the protein kinase superfamily. Tyr protein kinase family.

The protein localises to the cell membrane. It carries out the reaction L-tyrosyl-[protein] + ATP = O-phospho-L-tyrosyl-[protein] + ADP + H(+). This Arabidopsis thaliana (Mouse-ear cress) protein is C-type lectin receptor-like tyrosine-protein kinase At1g52310.